The chain runs to 137 residues: Histone H2B.3 (137 aa).

Over residues 1–37 (KPAEKKPAEKTPVAEKAPAEKKPKAGKKLPKDAAAGD) the composition is skewed to basic and acidic residues. The disordered stretch occupies residues 1–45 (KPAEKKPAEKTPVAEKAPAEKKPKAGKKLPKDAAAGDKKKKRSKK). 2 positions are modified to N6-acetyllysine: Lys-27 and Lys-28. A Glycyl lysine isopeptide (Lys-Gly) (interchain with G-Cter in ubiquitin) cross-link involves residue Lys-133.

Belongs to the histone H2B family. The nucleosome is a histone octamer containing two molecules each of H2A, H2B, H3 and H4 assembled in one H3-H4 heterotetramer and two H2A-H2B heterodimers. The octamer wraps approximately 147 bp of DNA. Post-translationally, can be acetylated to formH2BK33ac and H2BK34ac. Monoubiquitinated to form H2BK143ub1; may give a specific tag for epigenetic transcriptional activation. As to expression, ubiquitous. Highest level in shoots, fruits and young flower buds, including petals, anthers and ovules.

The protein localises to the nucleus. It is found in the chromosome. Functionally, core component of nucleosome. Nucleosomes wrap and compact DNA into chromatin, limiting DNA accessibility to the cellular machineries which require DNA as a template. Histones thereby play a central role in transcription regulation, DNA repair, DNA replication and chromosomal stability. DNA accessibility is regulated via a complex set of post-translational modifications of histones, also called histone code, and nucleosome remodeling. The protein is Histone H2B.3 (H2B-3) of Solanum lycopersicum (Tomato).